Reading from the N-terminus, the 407-residue chain is Peptidase T (407 aa).

Histidine 82 provides a ligand contact to Zn(2+). The active site involves aspartate 84. Aspartate 143 provides a ligand contact to Zn(2+). The active-site Proton acceptor is the glutamate 177. Residues glutamate 178, aspartate 200, and histidine 382 each contribute to the Zn(2+) site.

The protein belongs to the peptidase M20B family. Requires Zn(2+) as cofactor.

The protein resides in the cytoplasm. The enzyme catalyses Release of the N-terminal residue from a tripeptide.. Its function is as follows. Cleaves the N-terminal amino acid of tripeptides. This chain is Peptidase T, found in Streptococcus pyogenes serotype M28 (strain MGAS6180).